Reading from the N-terminus, the 471-residue chain is Probable flavin-containing monoamine oxidase B (471 aa).

Cys-406 bears the S-8alpha-FAD cysteine mark.

Belongs to the flavin monoamine oxidase family. FAD serves as cofactor.

The enzyme catalyses a secondary aliphatic amine + O2 + H2O = a primary amine + an aldehyde + H2O2. The protein is Probable flavin-containing monoamine oxidase B (maoB-1) of Dictyostelium discoideum (Social amoeba).